A 43-amino-acid polypeptide reads, in one-letter code: Protein PsbN 1 (43 aa).

Residues 3-23 traverse the membrane as a helical segment; sequence TATILGILIAAAVVGITVLAL.

This sequence belongs to the PsbN family.

It is found in the cellular thylakoid membrane. In terms of biological role, may play a role in photosystem I and II biogenesis. In Microcystis aeruginosa (strain NIES-843 / IAM M-2473), this protein is Protein PsbN 1.